The chain runs to 769 residues: Subtilisin-like protease 3 (769 aa).

Asparagine 68, asparagine 102, asparagine 108, asparagine 295, asparagine 316, and asparagine 356 each carry an N-linked (GlcNAc...) asparagine glycan. A compositionally biased stretch (basic residues) spans 293–302 (KINHSNKHKN). Residues 293-329 (KINHSNKHKNNNNNNNNNDYHNNNKSNYHSHSSAKCQ) form a disordered region. Over residues 303 to 325 (NNNNNNNNDYHNNNKSNYHSHSS) the composition is skewed to low complexity. The Peptidase S8 domain occupies 345-756 (GYDIIQMEEG…GGFINVYDLV (412 aa)). The active-site Charge relay system is aspartate 372. Positions 468–493 (NIKSSDNIKSSDNINSSDNIKSSDNN) are disordered. N-linked (GlcNAc...) asparagine glycosylation is found at asparagine 482 and asparagine 515. The Charge relay system role is filled by histidine 523. Residues asparagine 584 and asparagine 616 are each glycosylated (N-linked (GlcNAc...) asparagine). Serine 701 (charge relay system) is an active-site residue. Asparagine 720 is a glycosylation site (N-linked (GlcNAc...) asparagine).

The protein belongs to the peptidase S8 family.

The protein localises to the secreted. It catalyses the reaction Hydrolysis of proteins with broad specificity for peptide bonds, and a preference for a large uncharged residue in P1. Hydrolyzes peptide amides.. In terms of biological role, serine protease which may cleave PFN/profilin. The sequence is that of Subtilisin-like protease 3 from Plasmodium falciparum (isolate 3D7).